Consider the following 466-residue polypeptide: Glutamate decarboxylase alpha (466 aa).

Positions 62 and 83 each coordinate substrate. Pyridoxal 5'-phosphate contacts are provided by residues 126–127 (SS), Thr-212, and His-275. Position 276 is an N6-(pyridoxal phosphate)lysine (Lys-276).

Belongs to the group II decarboxylase family. Homohexamer. Pyridoxal 5'-phosphate serves as cofactor.

It carries out the reaction L-glutamate + H(+) = 4-aminobutanoate + CO2. Its function is as follows. Converts glutamate to gamma-aminobutyrate (GABA), consuming one intracellular proton in the reaction. The gad system helps to maintain a near-neutral intracellular pH when cells are exposed to extremely acidic conditions. The ability to survive transit through the acidic conditions of the stomach is essential for successful colonization of the mammalian host by commensal and pathogenic bacteria. The protein is Glutamate decarboxylase alpha (gadA) of Shigella flexneri.